The sequence spans 583 residues: Chloroplast sensor kinase, chloroplastic (583 aa).

A chloroplast-targeting transit peptide spans 1–50; sequence MSSIYLHGLSRRRRIGSVIVAIYMLDSCGAFLSASGSGRYPGFSYRGLSV. Residues 97–277 form a GAF region; it reads LFQELALSQL…SMDTERAALQ (181 aa). [3Fe-4S] cluster is bound at residue Cys-115. Residue His-292 is modified to Phosphohistidine; by autocatalysis. Positions 412 to 442 are disordered; that stretch reads AASGSNGPSNSTTSFSGNGSDVSTYTEDDGA. Positions 414–431 are enriched in low complexity; it reads SGSNGPSNSTTSFSGNGS. The region spanning 447–583 is the Histidine kinase domain; sequence SSLFSEMDLE…ALDWTLRKHW (137 aa).

The protein belongs to the chloroplast sensor kinase protein family. As to quaternary structure, oligomerizes. Requires [3Fe-4S] cluster as cofactor. Post-translationally, autophosphorylates, possibly on His-292.

It is found in the plastid. The protein resides in the chloroplast stroma. It carries out the reaction ATP + protein L-histidine = ADP + protein N-phospho-L-histidine.. In terms of biological role, sensor kinase that senses the plastoquinone (PQ) redox state involved in stoichiometry adjustment of both photosystems (e.g. long-term adaptation via transcriptional regulation of reaction center genes of photosystems I and II) and state transitions (e.g. short-term adaptation involving reversible post-translational phosphorylation of light-harvesting complex II, LHC II), thus linking photosynthesis with gene expression in chloroplasts. Reduced PQ suppresses its autophosphorylation activity. In Phaeodactylum tricornutum (strain CCAP 1055/1), this protein is Chloroplast sensor kinase, chloroplastic.